The sequence spans 592 residues: Zinc metalloproteinase dpy-31 (592 aa).

Positions 1 to 18 (MHKIFIIFGLLSLCAAHS) are cleaved as a signal peptide. Residues 19–127 (LRDLSNKDEE…TEGKTRVKRK (109 aa)) constitute a propeptide that is removed on maturation. Residues 22-46 (LSNKDEEDPPSSAPGVRKRRMMSEE) are disordered. Residues 127–326 (KFIGSNLRRW…IRLMNKIYCS (200 aa)) form the Peptidase M12A domain. A glycan (N-linked (GlcNAc...) asparagine) is linked at N167. 2 cysteine pairs are disulfide-bonded: C170–C325 and C193–C214. H222 is a Zn(2+) binding site. E223 is an active-site residue. Zn(2+) contacts are provided by H226 and H232. The 13-residue stretch at 349-361 (CRCPDGFTGQYCE) folds into the EGF-like domain. The cysteines at positions 371 and 399 are disulfide-linked. Residues 371-487 (CGGKISLTRS…KGFEARARAV (117 aa)) form the CUB domain. A glycan (N-linked (GlcNAc...) asparagine) is linked at N438. The TSP type-1 domain occupies 490–540 (AGNWNSWSPWTACSATCGACGSRMRTRTCPPGNACSGEPVETQICNTQACT). 3 cysteine pairs are disulfide-bonded: C502-C534, C506-C539, and C518-C524.

Zn(2+) serves as cofactor. In terms of tissue distribution, expressed in hypodermis, rectal and vulval epithelial cells and amphid socket cells.

It localises to the secreted. In terms of biological role, metalloprotease which cleaves the carboxyl terminus of procollagens, such as sqt-3, to mature collagens. Involved in cuticular collagen maturation. This Caenorhabditis elegans protein is Zinc metalloproteinase dpy-31.